Reading from the N-terminus, the 478-residue chain is Chromosomal replication initiator protein DnaA (478 aa).

The tract at residues 1 to 82 is domain I, interacts with DnaA modulators; that stretch reads MHTMNKTAES…ELGKNAKLLY (82 aa). The domain II stretch occupies residues 82-140; that stretch reads YKIKMENTYGNKLPFTEQLPSAHRSPVRTQEIDVPVQQKNPELRNPFIIPGIRNLKIES. Residues 141–358 form a domain III, AAA+ region region; that stretch reads QLNANYSFDN…GAIISLIAQS (218 aa). Positions 186, 188, 189, and 190 each coordinate ATP. The tract at residues 359–478 is domain IV, binds dsDNA; it reads SFNKKEVTLE…VDDINKKLSL (120 aa).

This sequence belongs to the DnaA family. As to quaternary structure, oligomerizes as a right-handed, spiral filament on DNA at oriC.

It is found in the cytoplasm. Its function is as follows. Plays an essential role in the initiation and regulation of chromosomal replication. ATP-DnaA binds to the origin of replication (oriC) to initiate formation of the DNA replication initiation complex once per cell cycle. Binds the DnaA box (a 9 base pair repeat at the origin) and separates the double-stranded (ds)DNA. Forms a right-handed helical filament on oriC DNA; dsDNA binds to the exterior of the filament while single-stranded (ss)DNA is stabiized in the filament's interior. The ATP-DnaA-oriC complex binds and stabilizes one strand of the AT-rich DNA unwinding element (DUE), permitting loading of DNA polymerase. After initiation quickly degrades to an ADP-DnaA complex that is not apt for DNA replication. Binds acidic phospholipids. This is Chromosomal replication initiator protein DnaA from Flavobacterium psychrophilum (strain ATCC 49511 / DSM 21280 / CIP 103535 / JIP02/86).